Here is a 335-residue protein sequence, read N- to C-terminus: Beta-ketoacyl-[acyl-carrier-protein] synthase III (335 aa).

Residues Cys120 and His261 contribute to the active site. Residues 262–266 (QANER) form an ACP-binding region. Asn291 is an active-site residue.

This sequence belongs to the thiolase-like superfamily. FabH family. As to quaternary structure, homodimer.

The protein resides in the cytoplasm. The catalysed reaction is malonyl-[ACP] + acetyl-CoA + H(+) = 3-oxobutanoyl-[ACP] + CO2 + CoA. It functions in the pathway lipid metabolism; fatty acid biosynthesis. Catalyzes the condensation reaction of fatty acid synthesis by the addition to an acyl acceptor of two carbons from malonyl-ACP. Catalyzes the first condensation reaction which initiates fatty acid synthesis and may therefore play a role in governing the total rate of fatty acid production. Possesses both acetoacetyl-ACP synthase and acetyl transacylase activities. Its substrate specificity determines the biosynthesis of branched-chain and/or straight-chain of fatty acids. The protein is Beta-ketoacyl-[acyl-carrier-protein] synthase III of Chlamydia pneumoniae (Chlamydophila pneumoniae).